Here is a 94-residue protein sequence, read N- to C-terminus: Cell division topological specificity factor (94 aa).

It belongs to the MinE family.

Its function is as follows. Prevents the cell division inhibition by proteins MinC and MinD at internal division sites while permitting inhibition at polar sites. This ensures cell division at the proper site by restricting the formation of a division septum at the midpoint of the long axis of the cell. This Beijerinckia indica subsp. indica (strain ATCC 9039 / DSM 1715 / NCIMB 8712) protein is Cell division topological specificity factor.